Reading from the N-terminus, the 308-residue chain is MTAAAADELHTIIDLIRYGTSRFNEAGLTFGHSYDNALDEATQLVLHSLHLPHDLGPAYGQARLLRAEKERVLALFQRRVDERVPAAYLTGEAWFAGLSFKSDARALVPRSPIAELIEAGFEPWLGGREVTRALDLCTGSGCIAIAMGHYNPHWDVDGVDISDDALALAAENKARLHADNVSLLKSDLFTGLAGRQYDLIVTNPPYVTNDETDALPQEYSYEPELGLRAGDDGLDLVLKILRDAPQHLSEDGLLICEVGESEQHLIKLLPEVDFAWVEFKVGQMGIFAVECRELIAHSARITELASAR.

This sequence belongs to the protein N5-glutamine methyltransferase family. PrmB subfamily.

The enzyme catalyses L-glutaminyl-[ribosomal protein uL3] + S-adenosyl-L-methionine = N(5)-methyl-L-glutaminyl-[ribosomal protein uL3] + S-adenosyl-L-homocysteine + H(+). Methylates large ribosomal subunit protein uL3 on a specific glutamine residue. This Xanthomonas campestris pv. campestris (strain ATCC 33913 / DSM 3586 / NCPPB 528 / LMG 568 / P 25) protein is Ribosomal protein uL3 glutamine methyltransferase.